The primary structure comprises 297 residues: GTPase Era (297 aa).

The Era-type G domain occupies 3 to 171 (KSGFVSIVGR…IKVIQNYLEE (169 aa)). The interval 11 to 18 (GRPNVGKS) is G1. 11-18 (GRPNVGKS) serves as a coordination point for GTP. The segment at 37 to 41 (QTTRN) is G2. The G3 stretch occupies residues 58 to 61 (DTPG). Residues 58–62 (DTPGI) and 120–123 (NKID) each bind GTP. Positions 120–123 (NKID) are G4. A G5 region spans residues 150–152 (ISA). Residues 194-280 (IREKVLHYLN…NLQLWVKVKE (87 aa)) enclose the KH type-2 domain.

Belongs to the TRAFAC class TrmE-Era-EngA-EngB-Septin-like GTPase superfamily. Era GTPase family. In terms of assembly, monomer.

Its subcellular location is the cytoplasm. It is found in the cell membrane. Its function is as follows. An essential GTPase that binds both GDP and GTP, with rapid nucleotide exchange. Plays a role in 16S rRNA processing and 30S ribosomal subunit biogenesis and possibly also in cell cycle regulation and energy metabolism. The sequence is that of GTPase Era from Clostridioides difficile (strain 630) (Peptoclostridium difficile).